The chain runs to 922 residues: Centrosomal protein of 104 kDa (922 aa).

Residues E210–M277 adopt a coiled-coil conformation. A compositionally biased stretch (low complexity) spans P307 to Q318. Disordered stretches follow at residues P307 to A333 and L348 to E419. Residues P396–R407 show a composition bias toward basic and acidic residues. HEAT repeat units follow at residues A526–I564 and G601–H637. Basic and acidic residues-rich tracts occupy residues T673–K697 and Q714–N725. 2 disordered regions span residues T673–I741 and P880–R922. The stretch at K678–A705 forms a coiled coil.

Interacts with CCP110 and CEP97. Interacts with ARMC9, TOGARAM1, CCDC66 and CSPP1. In terms of tissue distribution, expressed predominantly in the brain. Also detected, although at much lower levels, in the heart and the liver. Within the brain, expressed in the cerebral cortex, hippocampus, cerebellum and brainstem.

The protein resides in the cell projection. It is found in the cilium. Its subcellular location is the cytoplasm. The protein localises to the cytoskeleton. It localises to the microtubule organizing center. The protein resides in the centrosome. It is found in the centriole. Its subcellular location is the spindle pole. In terms of biological role, required for ciliogenesis and for structural integrity at the ciliary tip. The chain is Centrosomal protein of 104 kDa (Cep104) from Rattus norvegicus (Rat).